The primary structure comprises 206 residues: Glycerol-3-phosphate acyltransferase (206 aa).

A run of 6 helical transmembrane segments spans residues 4–24 (TAFA…AVIV), 53–73 (LAAA…VALA), 86–106 (GIAL…FFGF), 116–136 (VGIL…TWLF), 137–157 (MAFV…LAPV), and 160–180 (FFIL…AIVV).

This sequence belongs to the PlsY family. Probably interacts with PlsX.

It is found in the cell inner membrane. The enzyme catalyses an acyl phosphate + sn-glycerol 3-phosphate = a 1-acyl-sn-glycero-3-phosphate + phosphate. Its pathway is lipid metabolism; phospholipid metabolism. Its function is as follows. Catalyzes the transfer of an acyl group from acyl-phosphate (acyl-PO(4)) to glycerol-3-phosphate (G3P) to form lysophosphatidic acid (LPA). This enzyme utilizes acyl-phosphate as fatty acyl donor, but not acyl-CoA or acyl-ACP. The protein is Glycerol-3-phosphate acyltransferase of Chromobacterium violaceum (strain ATCC 12472 / DSM 30191 / JCM 1249 / CCUG 213 / NBRC 12614 / NCIMB 9131 / NCTC 9757 / MK).